The following is an 87-amino-acid chain: Small ribosomal subunit protein uS17 (87 aa).

This sequence belongs to the universal ribosomal protein uS17 family. In terms of assembly, part of the 30S ribosomal subunit.

One of the primary rRNA binding proteins, it binds specifically to the 5'-end of 16S ribosomal RNA. The protein is Small ribosomal subunit protein uS17 of Alcanivorax borkumensis (strain ATCC 700651 / DSM 11573 / NCIMB 13689 / SK2).